Reading from the N-terminus, the 318-residue chain is UDP-3-O-acylglucosamine N-acyltransferase 1 (318 aa).

Catalysis depends on H230, which acts as the Proton acceptor.

It belongs to the transferase hexapeptide repeat family. LpxD subfamily. In terms of assembly, homotrimer.

It carries out the reaction a UDP-3-O-[(3R)-3-hydroxyacyl]-alpha-D-glucosamine + a (3R)-hydroxyacyl-[ACP] = a UDP-2-N,3-O-bis[(3R)-3-hydroxyacyl]-alpha-D-glucosamine + holo-[ACP] + H(+). Its pathway is bacterial outer membrane biogenesis; LPS lipid A biosynthesis. Catalyzes the N-acylation of UDP-3-O-acylglucosamine using 3-hydroxyacyl-ACP as the acyl donor. Is involved in the biosynthesis of lipid A, a phosphorylated glycolipid that anchors the lipopolysaccharide to the outer membrane of the cell. In Sulfurimonas denitrificans (strain ATCC 33889 / DSM 1251) (Thiomicrospira denitrificans (strain ATCC 33889 / DSM 1251)), this protein is UDP-3-O-acylglucosamine N-acyltransferase 1.